The primary structure comprises 140 residues: Pro-vaccinia growth factor (140 aa).

Residues M1 to F18 form the signal peptide. Topologically, residues A19–Y100 are extracellular. N-linked (GlcNAc...) asparagine; by host glycosylation is present at N34. The EGF-like domain occupies A41 to Q81. Intrachain disulfides connect C45/C58, C53/C69, and C71/C80. A glycan (N-linked (GlcNAc...) asparagine; by host) is linked at N95. The helical transmembrane segment at I101–L121 threads the bilayer. The Cytoplasmic portion of the chain corresponds to S122–P140.

The protein belongs to the orthopoxvirus OPG019 family. In terms of assembly, vaccinia growth factor interacts with host EGFR and promotes EGFR dimerization.

It is found in the host membrane. The protein resides in the secreted. Its function is as follows. Stimulates cellular proliferation (hyperplasia)and mobility around infected cells to promote rapid and efficient spread of infection. This effect is beneficial for virus replication in vivo, because poxviruses replicate possibly better in proliferating cells than in quiescent cells. Acts by binding host EGFR, inducing its dimerization, autophosphorylation and leading to activation of several cellular pathways regulating cell proliferation or cell survival. The activation by host EGFR of mitogen activated protein kinases (MAPK) and extracellular-signal regulated kinases (ERK) are essential for the positive effect of vaccinia growth factor on poxvirus virulence in vivo. This chain is Pro-vaccinia growth factor (OPG019), found in Homo sapiens (Human).